Reading from the N-terminus, the 419-residue chain is tRNA modification GTPase MnmE (419 aa).

Residues Arg20, Glu76, and Arg115 each contribute to the (6S)-5-formyl-5,6,7,8-tetrahydrofolate site. The region spanning 211–348 (GYEVAIIGPP…LLDLVYDRLR (138 aa)) is the TrmE-type G domain. Asn221 serves as a coordination point for K(+). GTP-binding positions include 221–226 (NAGKST), 240–246 (SEIAGTT), and 265–268 (DTAG). Position 225 (Ser225) interacts with Mg(2+). The K(+) site is built by Ser240, Ile242, and Thr245. A Mg(2+)-binding site is contributed by Thr246. Position 419 (Lys419) interacts with (6S)-5-formyl-5,6,7,8-tetrahydrofolate.

It belongs to the TRAFAC class TrmE-Era-EngA-EngB-Septin-like GTPase superfamily. TrmE GTPase family. In terms of assembly, homodimer. Heterotetramer of two MnmE and two MnmG subunits. It depends on K(+) as a cofactor.

The protein localises to the cytoplasm. Functionally, exhibits a very high intrinsic GTPase hydrolysis rate. Involved in the addition of a carboxymethylaminomethyl (cmnm) group at the wobble position (U34) of certain tRNAs, forming tRNA-cmnm(5)s(2)U34. The protein is tRNA modification GTPase MnmE of Paracoccus denitrificans (strain Pd 1222).